A 206-amino-acid chain; its full sequence is Small ribosomal subunit protein uS4 (206 aa).

In terms of domain architecture, S4 RNA-binding spans 96–156 (NRLDNVTYRI…KNSKLQSRIK (61 aa)).

This sequence belongs to the universal ribosomal protein uS4 family. In terms of assembly, part of the 30S ribosomal subunit. Contacts protein S5. The interaction surface between S4 and S5 is involved in control of translational fidelity.

Its function is as follows. One of the primary rRNA binding proteins, it binds directly to 16S rRNA where it nucleates assembly of the body of the 30S subunit. With S5 and S12 plays an important role in translational accuracy. The chain is Small ribosomal subunit protein uS4 from Buchnera aphidicola subsp. Baizongia pistaciae (strain Bp).